The following is a 271-amino-acid chain: MRAYLELARPINCAMAALGVVVGELIAGARLDVGAVLAPVVAAVVCAGGNAINDYFDAEVDAVNRPDRPIPSGRVSPRSARMFALGCFAVGVGMATVINRMCLAIAALNSVLLYLYSWRLKGTPLIGNVMVSYLVGSCFLFGAAVGQRPAPAVWLFLLAFLANLVREILKDLEDVEGDAALGLKTLPIAYGEGVALRVATVFAIALAVLTPLPYLDGVVGWPYLVLALPAAAVILLASVLAVAGSWDAGKAQRVVKVGMLLGLLAFLASLL.

8 helical membrane-spanning segments follow: residues 11–31, 33–53, 88–108, 125–145, 149–169, 201–221, 224–244, and 251–271; these read INCA…GARL, VGAV…NAIN, FAVG…IAAL, LIGN…GAAV, PAPA…REIL, VFAI…VVGW, LVLA…AVAG, and AQRV…ASLL.

Belongs to the UbiA prenyltransferase family. DGGGP synthase subfamily. Mg(2+) serves as cofactor.

The protein resides in the cell membrane. It carries out the reaction sn-3-O-(geranylgeranyl)glycerol 1-phosphate + (2E,6E,10E)-geranylgeranyl diphosphate = 2,3-bis-O-(geranylgeranyl)-sn-glycerol 1-phosphate + diphosphate. It participates in membrane lipid metabolism; glycerophospholipid metabolism. Its function is as follows. Prenyltransferase that catalyzes the transfer of the geranylgeranyl moiety of geranylgeranyl diphosphate (GGPP) to the C2 hydroxyl of (S)-3-O-geranylgeranylglyceryl phosphate (GGGP). This reaction is the second ether-bond-formation step in the biosynthesis of archaeal membrane lipids. This chain is Digeranylgeranylglyceryl phosphate synthase, found in Methanopyrus kandleri (strain AV19 / DSM 6324 / JCM 9639 / NBRC 100938).